The sequence spans 296 residues: Probable DNA-directed RNA polymerase III subunit RPC6 (296 aa).

Belongs to the eukaryotic RPC34/RPC39 RNA polymerase subunit family.

The protein resides in the nucleus. DNA-dependent RNA polymerase catalyzes the transcription of DNA into RNA using the four ribonucleoside triphosphates as substrates. Specific peripheric component of RNA polymerase III which synthesizes small RNAs, such as 5S rRNA and tRNAs. The sequence is that of Probable DNA-directed RNA polymerase III subunit RPC6 from Caenorhabditis elegans.